Consider the following 185-residue polypeptide: Elongation factor P (185 aa).

This sequence belongs to the elongation factor P family.

It localises to the cytoplasm. It functions in the pathway protein biosynthesis; polypeptide chain elongation. Its function is as follows. Involved in peptide bond synthesis. Stimulates efficient translation and peptide-bond synthesis on native or reconstituted 70S ribosomes in vitro. Probably functions indirectly by altering the affinity of the ribosome for aminoacyl-tRNA, thus increasing their reactivity as acceptors for peptidyl transferase. The protein is Elongation factor P of Thermotoga petrophila (strain ATCC BAA-488 / DSM 13995 / JCM 10881 / RKU-1).